The sequence spans 274 residues: Glutamate racemase (274 aa).

Substrate contacts are provided by residues 9–10 (DS) and 41–42 (YG). The active-site Proton donor/acceptor is Cys73. 74 to 75 (NT) provides a ligand contact to substrate. The Proton donor/acceptor role is filled by Cys183. 184–185 (TH) provides a ligand contact to substrate.

Belongs to the aspartate/glutamate racemases family.

It carries out the reaction L-glutamate = D-glutamate. It participates in cell wall biogenesis; peptidoglycan biosynthesis. Functionally, provides the (R)-glutamate required for cell wall biosynthesis. In Shewanella baltica (strain OS155 / ATCC BAA-1091), this protein is Glutamate racemase.